Here is a 381-residue protein sequence, read N- to C-terminus: Creatine kinase M-type (381 aa).

Residues 11-98 (KLNYKPQEEY…FDPIIQDRHG (88 aa)) enclose the Phosphagen kinase N-terminal domain. Residues 125 to 367 (YVLSSRVRTG…KLMVEMEKKL (243 aa)) form the Phosphagen kinase C-terminal domain. 128–132 (SSRVR) lines the ATP pocket. The residue at position 164 (Ser-164) is a Phosphoserine. A Phosphothreonine modification is found at Thr-166. Ser-178 carries the phosphoserine modification. The residue at position 180 (Thr-180) is a Phosphothreonine. His-191 lines the ATP pocket. At Ser-199 the chain carries Phosphoserine. 2 residues coordinate ATP: Arg-236 and Arg-292. Residues Thr-313 and Thr-322 each carry the phosphothreonine modification. Residues 320 to 325 (RGTGGV) and Asp-335 contribute to the ATP site. Position 372 is a phosphoserine (Ser-372).

Belongs to the ATP:guanido phosphotransferase family. Dimer of identical or non-identical chains, which can be either B (brain type) or M (muscle type). With MM being the major form in skeletal muscle and myocardium, MB existing in myocardium, and BB existing in many tissues, especially brain.

The protein resides in the cytoplasm. It carries out the reaction creatine + ATP = N-phosphocreatine + ADP + H(+). In terms of biological role, reversibly catalyzes the transfer of phosphate between ATP and various phosphogens (e.g. creatine phosphate). Creatine kinase isoenzymes play a central role in energy transduction in tissues with large, fluctuating energy demands, such as skeletal muscle, heart, brain and spermatozoa. This chain is Creatine kinase M-type (Ckm), found in Mus musculus (Mouse).